Here is a 164-residue protein sequence, read N- to C-terminus: Endoribonuclease YbeY (164 aa).

His130, His134, and His140 together coordinate Zn(2+).

The protein belongs to the endoribonuclease YbeY family. Zn(2+) is required as a cofactor.

The protein resides in the cytoplasm. In terms of biological role, single strand-specific metallo-endoribonuclease involved in late-stage 70S ribosome quality control and in maturation of the 3' terminus of the 16S rRNA. The sequence is that of Endoribonuclease YbeY from Streptococcus mutans serotype c (strain ATCC 700610 / UA159).